The sequence spans 124 residues: Succinate dehydrogenase cytochrome b556 subunit (124 aa).

Residues 1 to 29 are Cytoplasmic-facing; it reads MTKIKQEIYNKRPTSPHLTIYKPQISSTL. The chain crosses the membrane as a helical span at residues 30-55; it reads SILHRMTGVALFFVVSILVWWLILSK. At 56–67 the chain is on the periplasmic side; that stretch reads YDNNYLQLASCC. A helical transmembrane segment spans residues 68–88; it reads IIKICLVAFSYSWCYHLCNGI. H83 lines the heme pocket. Residues 89–103 are Cytoplasmic-facing; the sequence is RHLFWDIGYGFSIKA. Residues 104–124 traverse the membrane as a helical segment; that stretch reads VNITGWCVVVCSILLTMLLWV.

It belongs to the cytochrome b560 family. As to quaternary structure, part of an enzyme complex containing four subunits: a flavoprotein, an iron-sulfur protein, plus two membrane-anchoring proteins, SdhC and SdhD. The complex can form homotrimers. The cofactor is heme.

Its subcellular location is the cell inner membrane. Its pathway is carbohydrate metabolism; tricarboxylic acid cycle. Its function is as follows. Membrane-anchoring subunit of succinate dehydrogenase (SDH). The protein is Succinate dehydrogenase cytochrome b556 subunit (sdhC) of Rickettsia prowazekii (strain Madrid E).